Reading from the N-terminus, the 231-residue chain is Putative cobalt transport protein CbiM 1 (231 aa).

6 helical membrane-spanning segments follow: residues 6-26 (GFLP…FLIY), 41-61 (VLPL…VDIP), 79-99 (FFGP…QALL), 107-127 (TLGA…WLVF), 136-156 (VPLG…TYLI), and 172-192 (LTAF…ISII).

Belongs to the CbiM family. As to quaternary structure, forms an energy-coupling factor (ECF) transporter complex composed of an ATP-binding protein (A component, CbiO), a transmembrane protein (T component, CbiQ) and 2 possible substrate-capture proteins (S components, CbiM and CbiN) of unknown stoichimetry.

The protein resides in the cell membrane. It functions in the pathway cofactor biosynthesis; adenosylcobalamin biosynthesis. Part of the energy-coupling factor (ECF) transporter complex CbiMNOQ involved in cobalt import. The protein is Putative cobalt transport protein CbiM 1 of Methanocorpusculum labreanum (strain ATCC 43576 / DSM 4855 / Z).